A 688-amino-acid chain; its full sequence is Methionine--tRNA ligase (688 aa).

The 'HIGH' region motif lies at 20-30; it reads PYANGSIHLGH. Zn(2+)-binding residues include cysteine 151, cysteine 154, cysteine 164, and cysteine 167. A 'KMSKS' region motif is present at residues 337–341; that stretch reads KMSKS. Lysine 340 lines the ATP pocket. A tRNA-binding domain is found at 587-688; the sequence is TFAQVDLRIA…EGAQPGMRVM (102 aa).

It belongs to the class-I aminoacyl-tRNA synthetase family. MetG type 1 subfamily. Homodimer. It depends on Zn(2+) as a cofactor.

It localises to the cytoplasm. The enzyme catalyses tRNA(Met) + L-methionine + ATP = L-methionyl-tRNA(Met) + AMP + diphosphate. In terms of biological role, is required not only for elongation of protein synthesis but also for the initiation of all mRNA translation through initiator tRNA(fMet) aminoacylation. This is Methionine--tRNA ligase from Vibrio parahaemolyticus serotype O3:K6 (strain RIMD 2210633).